Reading from the N-terminus, the 552-residue chain is Arginine--tRNA ligase (552 aa).

The 'HIGH' region signature appears at 123-133 (ANPTGPLTIGR).

Belongs to the class-I aminoacyl-tRNA synthetase family. As to quaternary structure, monomer.

It is found in the cytoplasm. The catalysed reaction is tRNA(Arg) + L-arginine + ATP = L-arginyl-tRNA(Arg) + AMP + diphosphate. The protein is Arginine--tRNA ligase of Chlorobium luteolum (strain DSM 273 / BCRC 81028 / 2530) (Pelodictyon luteolum).